The sequence spans 107 residues: Heme-degrading monooxygenase (107 aa).

Positions 2-93 constitute an ABM domain; it reads VIVANKTLIR…DYILGNEIEF (92 aa). Asn6 serves as a coordination point for Fe cation. His76 lines the heme pocket.

It belongs to the antibiotic biosynthesis monooxygenase family. Heme-degrading monooxygenase IsdG subfamily. Homodimer.

The protein localises to the cytoplasm. The catalysed reaction is heme b + 3 reduced [NADPH--hemoprotein reductase] + 3 O2 = biliverdin IXalpha + CO + Fe(2+) + 3 oxidized [NADPH--hemoprotein reductase] + 3 H2O + H(+). Its function is as follows. Allows bacterial pathogens to use the host heme as an iron source. Catalyzes the oxidative degradation of the heme macrocyclic porphyrin ring to the biliverdin in the presence of a suitable electron donor such as ascorbate or NADPH--cytochrome P450 reductase, with subsequent release of free iron. This Shouchella clausii (strain KSM-K16) (Alkalihalobacillus clausii) protein is Heme-degrading monooxygenase.